Reading from the N-terminus, the 268-residue chain is MADS-box protein FBP24 (268 aa).

One can recognise an MADS-box domain in the interval 4 to 64 (MGRGKIEVKR…GKLFEYCSQP (61 aa)). The region spanning 88–178 (RVQLYDEVAK…YQWLMNNQMY (91 aa)) is the K-box domain. The interval 243–268 (NSISPYRLQPSHPNLQDSHVHGPSYD) is disordered.

It is found in the nucleus. In terms of biological role, probable transcription factor. The chain is MADS-box protein FBP24 (FBP24) from Petunia hybrida (Petunia).